The following is a 313-amino-acid chain: tRNA dimethylallyltransferase (313 aa).

14-21 provides a ligand contact to ATP; sequence GPTASGKT. 16 to 21 provides a ligand contact to substrate; sequence TASGKT. Interaction with substrate tRNA regions lie at residues 39-42 and 163-167; these read DSAL and QRIGR.

This sequence belongs to the IPP transferase family. Monomer. Mg(2+) is required as a cofactor.

The enzyme catalyses adenosine(37) in tRNA + dimethylallyl diphosphate = N(6)-dimethylallyladenosine(37) in tRNA + diphosphate. Its function is as follows. Catalyzes the transfer of a dimethylallyl group onto the adenine at position 37 in tRNAs that read codons beginning with uridine, leading to the formation of N6-(dimethylallyl)adenosine (i(6)A). The sequence is that of tRNA dimethylallyltransferase from Thiobacillus denitrificans (strain ATCC 25259 / T1).